The primary structure comprises 468 residues: Trehalose-2-sulfate acyltransferase PapA2 (468 aa).

It belongs to the PapA acyltransferase family.

It carries out the reaction 2-O-sulfo-alpha,alpha-trehalose + hexadecanoyl-CoA = 2-O-sulfo-2'-O-hexadecanoyl-alpha,alpha-trehalose + CoA. In terms of biological role, required for the biosynthesis of sulfolipid-1 (SL-1), a major mycobacterial cell wall lipid. Catalyzes the acylation of trehalose-2-sulfate by adding the palmitoyl group at the 2'-position to yield the intermediate trehalose-2-sulfate-2'-palmitate (SL659). This is Trehalose-2-sulfate acyltransferase PapA2 (papA2) from Mycobacterium bovis (strain ATCC BAA-935 / AF2122/97).